Here is a 143-residue protein sequence, read N- to C-terminus: Nucleoside diphosphate kinase (143 aa).

ATP-binding residues include Lys11, Phe59, Arg87, Thr93, Arg104, and Asn114. Catalysis depends on His117, which acts as the Pros-phosphohistidine intermediate.

Belongs to the NDK family. As to quaternary structure, homotetramer. Mg(2+) is required as a cofactor.

It localises to the cytoplasm. It catalyses the reaction a 2'-deoxyribonucleoside 5'-diphosphate + ATP = a 2'-deoxyribonucleoside 5'-triphosphate + ADP. It carries out the reaction a ribonucleoside 5'-diphosphate + ATP = a ribonucleoside 5'-triphosphate + ADP. Its function is as follows. Major role in the synthesis of nucleoside triphosphates other than ATP. The ATP gamma phosphate is transferred to the NDP beta phosphate via a ping-pong mechanism, using a phosphorylated active-site intermediate. The protein is Nucleoside diphosphate kinase of Shewanella sp. (strain W3-18-1).